Consider the following 88-residue polypeptide: UPF0367 protein AM1_1885 (88 aa).

The protein belongs to the UPF0367 family.

The protein is UPF0367 protein AM1_1885 of Acaryochloris marina (strain MBIC 11017).